Reading from the N-terminus, the 634-residue chain is Putative ABC transporter ATP-binding protein MG015 homolog (634 aa).

The next 6 membrane-spanning stretches (helical) occupy residues 54–74, 111–131, 189–209, 213–233, 296–316, and 325–345; these read VLYV…NSIL, LTIV…FNVA, VGGQ…ILFV, VIAL…FLFL, VFIY…SISI, and IPSF…IAAL. An ABC transmembrane type-1 domain is found at 54-364; sequence VLYVMVCAIF…IFSLWNLIQL (311 aa). Residues 397–631 form the ABC transporter domain; the sequence is IRFEKVVFGY…NGFYARLKRS (235 aa). 430-437 provides a ligand contact to ATP; sequence GPTGAGKS.

This sequence belongs to the ABC transporter superfamily.

It is found in the cell membrane. This chain is Putative ABC transporter ATP-binding protein MG015 homolog, found in Mycoplasma pneumoniae (strain ATCC 29342 / M129 / Subtype 1) (Mycoplasmoides pneumoniae).